The sequence spans 492 residues: NADH-ubiquinone oxidoreductase chain 4 (492 aa).

A run of 15 helical transmembrane segments spans residues 9 to 29, 36 to 56, 63 to 83, 86 to 106, 115 to 135, 136 to 156, 170 to 190, 211 to 231, 242 to 262, 269 to 289, 304 to 324, 332 to 352, 370 to 390, 410 to 430, and 454 to 474; these read LILTSLTPLIGVFILLLIPSA, NFALWISCLTFLFSLLLWIQF, FQFSTTFLWFPFFNLYYTIGI, ISLFFILLTTLLIISCILVSW, DYLICFLILEFLLIQVFSVLD, LLLFYIYFESVLIPMFLIVGV, FFLYTLIGSLLMLLALLNIYF, IFLWLSFFASFAVKIPMIPFH, PTAGSVILAGILLKMGGYGFL, FPVASIFFTPFIFTLSLVAII, IIAYSSVSHMGFVTIGIFSLN, ILLMLSHGLVSSALFLCIGVL, VMPLFGVFFLFFTFANLGFPG, TLTLFASLGMIFGAAYSIWLF, and FWILIPLAILILWMGIYPNSF.

This sequence belongs to the complex I subunit 4 family.

It localises to the mitochondrion membrane. It carries out the reaction a ubiquinone + NADH + 5 H(+)(in) = a ubiquinol + NAD(+) + 4 H(+)(out). Functionally, core subunit of the mitochondrial membrane respiratory chain NADH dehydrogenase (Complex I) that is believed to belong to the minimal assembly required for catalysis. Complex I functions in the transfer of electrons from NADH to the respiratory chain. The immediate electron acceptor for the enzyme is believed to be ubiquinone. The sequence is that of NADH-ubiquinone oxidoreductase chain 4 (ND4) from Chondrus crispus (Carrageen Irish moss).